Here is a 324-residue protein sequence, read N- to C-terminus: Holliday junction branch migration complex subunit RuvB (324 aa).

A large ATPase domain (RuvB-L) region spans residues 1-168 (MEDLALRPKT…FGIVEHLEYY (168 aa)). Residues tyrosine 14, isoleucine 15, glycine 48, lysine 51, threonine 52, threonine 53, aspartate 97, threonine 146, tyrosine 168, and arginine 205 each contribute to the ATP site. Threonine 52 is a Mg(2+) binding site. A small ATPAse domain (RuvB-S) region spans residues 169–239 (TPEELAQGVM…RALEALAALG (71 aa)). Positions 242–324 (ELGLEKRDRE…PPPVGPLLEP (83 aa)) are head domain (RuvB-H). 2 residues coordinate DNA: arginine 297 and arginine 302.

It belongs to the RuvB family. As to quaternary structure, homohexamer. Forms a complex with RuvA. Electron microscopic images suggest 2 closely interacting RuvA tetramers sandwich the HJ DNA; each tetramer associates with an RuvB hexamer. Forms 2 complexes with Holliday junction (HJ) DNA which probably have 1 and 2 RuvA tetramers per complex (called complex I and complex II). Forms an RuvA(8)-RuvB(12)-Holliday junction (HJ) complex. HJ DNA is sandwiched between 2 RuvA tetramers; dsDNA enters through RuvA and exits via RuvB. An RuvB hexamer assembles on each DNA strand where it exits the tetramer. Each RuvB hexamer is contacted by two RuvA subunits (via domain III) on 2 adjacent RuvB subunits; this complex drives branch migration. In the full resolvosome a probable DNA-RuvA(4)-RuvB(12)-RuvC(2) complex forms which resolves the HJ. It depends on Mg(2+) as a cofactor.

The protein resides in the cytoplasm. It catalyses the reaction ATP + H2O = ADP + phosphate + H(+). Its activity is regulated as follows. The activity of RuvB is enhanced by E.coli RuvA. Functionally, the RuvA-RuvB-RuvC complex processes Holliday junction (HJ) DNA during genetic recombination and DNA repair, while the RuvA-RuvB complex plays an important role in the rescue of blocked DNA replication forks via replication fork reversal (RFR). RuvA specifically binds to HJ cruciform DNA, conferring on it an open structure. The RuvB hexamer acts as an ATP-dependent pump, pulling dsDNA into and through the RuvAB complex. RuvB forms 2 homohexamers on either side of HJ DNA bound by 1 or 2 RuvA tetramers; 4 subunits per hexamer contact DNA at a time. Coordinated motions by a converter formed by DNA-disengaged RuvB subunits stimulates ATP hydrolysis and nucleotide exchange. Immobilization of the converter enables RuvB to convert the ATP-contained energy into a lever motion, pulling 2 nucleotides of DNA out of the RuvA tetramer per ATP hydrolyzed, thus driving DNA branch migration. The RuvB motors rotate together with the DNA substrate, which together with the progressing nucleotide cycle form the mechanistic basis for DNA recombination by continuous HJ branch migration. Branch migration allows RuvC to scan DNA until it finds its consensus sequence, where it cleaves and resolves cruciform DNA. Its function is as follows. RuvB is a Mg(2+)-dependent, DNA-dependent ATPase with an equal preference for supercoiled and linear dsDNA; all (d)NTPs tested were efficiently hydrolyzed. Promotes Holliday junction (HJ) dissociation at 60 degrees Celsius in the presence of ATP but not ATP-gamma-S or ADP; (d)ATP, (d)CTP and dTTP also power dissociation in the absence of any RuvA. RuvA stimulates the ATPase of RuvB in the presence of dsDNA and HJ branch migration by RuvB. Excess RuvB stimulates some branch migration in vitro even in the presence of mutant RuvA. The protein is Holliday junction branch migration complex subunit RuvB of Thermus thermophilus (strain ATCC 27634 / DSM 579 / HB8).